Consider the following 274-residue polypeptide: Diaminopimelate epimerase (274 aa).

Asn-11, Gln-44, and Asn-64 together coordinate substrate. Residue Cys-73 is the Proton donor of the active site. Substrate is bound by residues 74–75 (GN), Asn-157, Asn-190, and 208–209 (ER). The active-site Proton acceptor is Cys-217. Residue 218-219 (GS) coordinates substrate.

The protein belongs to the diaminopimelate epimerase family. As to quaternary structure, homodimer.

The protein resides in the cytoplasm. The catalysed reaction is (2S,6S)-2,6-diaminopimelate = meso-2,6-diaminopimelate. Its pathway is amino-acid biosynthesis; L-lysine biosynthesis via DAP pathway; DL-2,6-diaminopimelate from LL-2,6-diaminopimelate: step 1/1. Its function is as follows. Catalyzes the stereoinversion of LL-2,6-diaminopimelate (L,L-DAP) to meso-diaminopimelate (meso-DAP), a precursor of L-lysine and an essential component of the bacterial peptidoglycan. The polypeptide is Diaminopimelate epimerase (Enterobacter sp. (strain 638)).